The chain runs to 122 residues: MRHRNGNRKLNRTSSHRAAMLRNMANSLLTHETIVTTLPKAKELRRVVEPLITLGKKPSLASRRLAFDRTRDRDVVVKLFGDLGPRFTARNGGYVRVLKYGFRKGDNAPLALVELVDKPAAE.

The protein belongs to the bacterial ribosomal protein bL17 family. As to quaternary structure, part of the 50S ribosomal subunit. Contacts protein L32.

This is Large ribosomal subunit protein bL17 from Neisseria gonorrhoeae (strain ATCC 700825 / FA 1090).